The primary structure comprises 63 residues: Small ribosomal subunit protein eS30B (63 aa).

A disordered region spans residues 1 to 35 (MAKVHGSLARAGKVKSQTPKVEKTEKPKKPKGRAY). At serine 16 the chain carries Phosphoserine. The residue at position 48 (threonine 48) is a Phosphothreonine.

This sequence belongs to the eukaryotic ribosomal protein eS30 family. As to quaternary structure, component of the small ribosomal subunit (SSU). Mature yeast ribosomes consist of a small (40S) and a large (60S) subunit. The 40S small subunit contains 1 molecule of ribosomal RNA (18S rRNA) and 33 different proteins (encoded by 57 genes). The large 60S subunit contains 3 rRNA molecules (25S, 5.8S and 5S rRNA) and 46 different proteins (encoded by 81 genes).

It localises to the cytoplasm. Functionally, component of the ribosome, a large ribonucleoprotein complex responsible for the synthesis of proteins in the cell. The small ribosomal subunit (SSU) binds messenger RNAs (mRNAs) and translates the encoded message by selecting cognate aminoacyl-transfer RNA (tRNA) molecules. The large subunit (LSU) contains the ribosomal catalytic site termed the peptidyl transferase center (PTC), which catalyzes the formation of peptide bonds, thereby polymerizing the amino acids delivered by tRNAs into a polypeptide chain. The nascent polypeptides leave the ribosome through a tunnel in the LSU and interact with protein factors that function in enzymatic processing, targeting, and the membrane insertion of nascent chains at the exit of the ribosomal tunnel. The sequence is that of Small ribosomal subunit protein eS30B from Saccharomyces cerevisiae (strain ATCC 204508 / S288c) (Baker's yeast).